A 369-amino-acid chain; its full sequence is 3-dehydroquinate synthase (369 aa).

NAD(+) is bound by residues 71 to 76 (DGECHK), 105 to 109 (GVIND), 129 to 130 (TT), Lys-142, Lys-151, and 169 to 172 (TLST). The Zn(2+) site is built by Glu-184, His-247, and His-264.

This sequence belongs to the sugar phosphate cyclases superfamily. Dehydroquinate synthase family. It depends on Co(2+) as a cofactor. Zn(2+) serves as cofactor. The cofactor is NAD(+).

It localises to the cytoplasm. It catalyses the reaction 7-phospho-2-dehydro-3-deoxy-D-arabino-heptonate = 3-dehydroquinate + phosphate. It participates in metabolic intermediate biosynthesis; chorismate biosynthesis; chorismate from D-erythrose 4-phosphate and phosphoenolpyruvate: step 2/7. Its function is as follows. Catalyzes the conversion of 3-deoxy-D-arabino-heptulosonate 7-phosphate (DAHP) to dehydroquinate (DHQ). This chain is 3-dehydroquinate synthase, found in Dichelobacter nodosus (strain VCS1703A).